The primary structure comprises 156 residues: Myosin regulatory light chain B, smooth adductor muscle (156 aa).

A1 carries the post-translational modification Blocked amino end (Ala). EF-hand domains lie at 15–50 (KQIQ…LGRT) and 84–119 (DTEE…MGDN). Ca(2+) contacts are provided by D28, N30, D32, and D39.

Functionally, in molluscan muscle, calcium regulation is associated with myosin rather than with actin. Muscle myosin contains two types of light chains: the catalytic light chain, essential for ATPase activity, and the regulatory light chain, a calcium-binding protein responsible for Ca(2+) dependent binding and Ca(2+) dependent Mg-ATPase activity. In Mizuhopecten yessoensis (Japanese scallop), this protein is Myosin regulatory light chain B, smooth adductor muscle.